Here is a 570-residue protein sequence, read N- to C-terminus: Sulfite reductase [NADPH] hemoprotein beta-component (570 aa).

The [4Fe-4S] cluster site is built by Cys434, Cys440, Cys479, and Cys483. Position 483 (Cys483) interacts with siroheme.

The protein belongs to the nitrite and sulfite reductase 4Fe-4S domain family. Alpha(8)-beta(8). The alpha component is a flavoprotein, the beta component is a hemoprotein. Siroheme serves as cofactor. [4Fe-4S] cluster is required as a cofactor.

It catalyses the reaction hydrogen sulfide + 3 NADP(+) + 3 H2O = sulfite + 3 NADPH + 4 H(+). Its pathway is sulfur metabolism; hydrogen sulfide biosynthesis; hydrogen sulfide from sulfite (NADPH route): step 1/1. In terms of biological role, component of the sulfite reductase complex that catalyzes the 6-electron reduction of sulfite to sulfide. This is one of several activities required for the biosynthesis of L-cysteine from sulfate. The protein is Sulfite reductase [NADPH] hemoprotein beta-component of Enterobacter sp. (strain 638).